Here is a 212-residue protein sequence, read N- to C-terminus: Octanoyltransferase (212 aa).

The BPL/LPL catalytic domain maps to 33–212; that stretch reads GTAPELVWLL…ATFPEVFGAD (180 aa). Substrate-binding positions include 72 to 79, 144 to 146, and 157 to 159; these read RGGQYTYH, AIG, and GIA. The active-site Acyl-thioester intermediate is the C175.

It belongs to the LipB family.

The protein resides in the cytoplasm. The catalysed reaction is octanoyl-[ACP] + L-lysyl-[protein] = N(6)-octanoyl-L-lysyl-[protein] + holo-[ACP] + H(+). The protein operates within protein modification; protein lipoylation via endogenous pathway; protein N(6)-(lipoyl)lysine from octanoyl-[acyl-carrier-protein]: step 1/2. Functionally, catalyzes the transfer of endogenously produced octanoic acid from octanoyl-acyl-carrier-protein onto the lipoyl domains of lipoate-dependent enzymes. Lipoyl-ACP can also act as a substrate although octanoyl-ACP is likely to be the physiological substrate. In Paramagnetospirillum magneticum (strain ATCC 700264 / AMB-1) (Magnetospirillum magneticum), this protein is Octanoyltransferase.